Consider the following 328-residue polypeptide: Sphingolipid delta(4)-desaturase DES1-like (328 aa).

A run of 3 helical transmembrane segments spans residues 50–70 (PLAFLKIAAVVSLQLWTATLL), 78–98 (ILTVAYFFGSFLNHNLFLAIH), and 114–134 (WLGIFANLPIGVPMSITFQKY). The short motif at 98-102 (HELSH) is the Histidine box-1 element. The short motif at 135–139 (HLEHH) is the Histidine box-2 element. 3 consecutive transmembrane segments (helical) span residues 164 to 184 (LSKSVWVVFQLFFYALRPLFL), 192 to 212 (WEFTNLIIQIALDASMVYFFG), and 217 to 237 (AYLILSTFVGGGMHPMAGHFI). The Histidine box-3 signature appears at 266–270 (HNEHH).

It belongs to the fatty acid desaturase type 1 family. DEGS subfamily.

The protein resides in the endoplasmic reticulum membrane. The catalysed reaction is an N-acylsphinganine + 2 Fe(II)-[cytochrome b5] + O2 + 2 H(+) = an N-acylsphing-4-enine + 2 Fe(III)-[cytochrome b5] + 2 H2O. Sphingolipid-delta-4-desaturase required for the biosynthesis of delta-4-unsaturated sphingolipids and derivatives. The sequence is that of Sphingolipid delta(4)-desaturase DES1-like from Oryza sativa subsp. japonica (Rice).